A 126-amino-acid polypeptide reads, in one-letter code: Holo-[acyl-carrier-protein] synthase (126 aa).

2 residues coordinate Mg(2+): Asp9 and Glu58.

The protein belongs to the P-Pant transferase superfamily. AcpS family. Mg(2+) serves as cofactor.

Its subcellular location is the cytoplasm. It carries out the reaction apo-[ACP] + CoA = holo-[ACP] + adenosine 3',5'-bisphosphate + H(+). Its function is as follows. Transfers the 4'-phosphopantetheine moiety from coenzyme A to a Ser of acyl-carrier-protein. In Salmonella paratyphi B (strain ATCC BAA-1250 / SPB7), this protein is Holo-[acyl-carrier-protein] synthase.